Reading from the N-terminus, the 402-residue chain is Nicotinate phosphoribosyltransferase (402 aa).

At histidine 224 the chain carries Phosphohistidine; by autocatalysis.

The protein belongs to the NAPRTase family. Transiently phosphorylated on a His residue during the reaction cycle. Phosphorylation strongly increases the affinity for substrates and increases the rate of nicotinate D-ribonucleotide production. Dephosphorylation regenerates the low-affinity form of the enzyme, leading to product release.

The catalysed reaction is nicotinate + 5-phospho-alpha-D-ribose 1-diphosphate + ATP + H2O = nicotinate beta-D-ribonucleotide + ADP + phosphate + diphosphate. It functions in the pathway cofactor biosynthesis; NAD(+) biosynthesis; nicotinate D-ribonucleotide from nicotinate: step 1/1. Catalyzes the synthesis of beta-nicotinate D-ribonucleotide from nicotinate and 5-phospho-D-ribose 1-phosphate at the expense of ATP. The protein is Nicotinate phosphoribosyltransferase of Neisseria meningitidis serogroup C (strain 053442).